The primary structure comprises 222 residues: LexA repressor (222 aa).

Positions 28–48 form a DNA-binding region, H-T-H motif; it reads IREIGEHMDIRSTNGVNDHLK. Residues serine 135 and lysine 172 each act as for autocatalytic cleavage activity in the active site.

This sequence belongs to the peptidase S24 family. Homodimer.

It carries out the reaction Hydrolysis of Ala-|-Gly bond in repressor LexA.. Represses a number of genes involved in the response to DNA damage (SOS response), including recA and lexA. In the presence of single-stranded DNA, RecA interacts with LexA causing an autocatalytic cleavage which disrupts the DNA-binding part of LexA, leading to derepression of the SOS regulon and eventually DNA repair. This is LexA repressor from Myxococcus xanthus (strain DK1622).